A 368-amino-acid chain; its full sequence is 3-dehydroquinate synthase (368 aa).

NAD(+) contacts are provided by residues 112–116 (GVVGD), 136–137 (TT), Lys149, Lys158, and 176–179 (FLDT). 3 residues coordinate Zn(2+): Glu191, His257, and His274.

The protein belongs to the sugar phosphate cyclases superfamily. Dehydroquinate synthase family. Requires Co(2+) as cofactor. Zn(2+) serves as cofactor. The cofactor is NAD(+).

The protein resides in the cytoplasm. It catalyses the reaction 7-phospho-2-dehydro-3-deoxy-D-arabino-heptonate = 3-dehydroquinate + phosphate. The protein operates within metabolic intermediate biosynthesis; chorismate biosynthesis; chorismate from D-erythrose 4-phosphate and phosphoenolpyruvate: step 2/7. Its function is as follows. Catalyzes the conversion of 3-deoxy-D-arabino-heptulosonate 7-phosphate (DAHP) to dehydroquinate (DHQ). This chain is 3-dehydroquinate synthase, found in Natranaerobius thermophilus (strain ATCC BAA-1301 / DSM 18059 / JW/NM-WN-LF).